The primary structure comprises 109 residues: Envelope small membrane protein (109 aa).

The Virion surface portion of the chain corresponds to 1–11 (MTNLLNKSLEE). A helical transmembrane segment spans residues 12-32 (NGSFLTAVYIFVGFVALYLLG). Topologically, residues 33-109 (RALQAFVQAA…QDVQRNKLYS (77 aa)) are intravirion. A disordered region spans residues 89–109 (NGWNNKNPANFQDVQRNKLYS). Residues 90-109 (GWNNKNPANFQDVQRNKLYS) show a composition bias toward polar residues.

Belongs to the gammacoronaviruses E protein family. Homooligomer. Interacts with the M membrane protein in the budding compartment of the host cell, which is located between endoplasmic reticulum and the Golgi complex. The cytoplasmic tails of both proteins are important for this function. Interacts with Nucleoprotein.

The protein resides in the host Golgi apparatus membrane. Functionally, plays a central role in virus morphogenesis and assembly. Acts as a viroporin and self-assembles in host membranes forming pentameric protein-lipid pores that allow ion transport. Also plays a role in the induction of apoptosis. The sequence is that of Envelope small membrane protein from Avian infectious bronchitis virus (strain KB8523) (IBV).